The chain runs to 237 residues: Phosphoadenosine 5'-phosphosulfate reductase (237 aa).

The Nucleophile; cysteine thiosulfonate intermediate role is filled by Cys231.

The protein belongs to the PAPS reductase family. CysH subfamily.

It is found in the cytoplasm. The catalysed reaction is [thioredoxin]-disulfide + sulfite + adenosine 3',5'-bisphosphate + 2 H(+) = [thioredoxin]-dithiol + 3'-phosphoadenylyl sulfate. Its pathway is sulfur metabolism; hydrogen sulfide biosynthesis; sulfite from sulfate: step 3/3. In terms of biological role, catalyzes the formation of sulfite from phosphoadenosine 5'-phosphosulfate (PAPS) using thioredoxin as an electron donor. The protein is Phosphoadenosine 5'-phosphosulfate reductase of Xylella fastidiosa (strain M23).